Consider the following 333-residue polypeptide: uncharacterized protein (333 aa).

This is an uncharacterized protein from Caenorhabditis elegans.